The primary structure comprises 339 residues: NADH-quinone oxidoreductase subunit H (339 aa).

The next 9 helical transmembrane spans lie at 9–29, 50–70, 82–102, 115–135, 161–181, 187–207, 235–255, 275–295, and 311–331; these read IFPLIIIALKVVAITIPLILC, PNVVGPFGLLQPIADAVKLLF, ILFILAPMITFILSLIGWAVI, VGVLYILAISSLSVYGIIIAG, MGLVIITVLLTTGTLNLSEII, MPWWIDLMLLPMGVVFFISVL, MGFALFFLGEYANMILVSAMT, IPGFFWFVFKVGFLLFCFLWI, and GWKVFLPLTLFWVVLVSSVLV.

This sequence belongs to the complex I subunit 1 family. As to quaternary structure, NDH-1 is composed of 14 different subunits. Subunits NuoA, H, J, K, L, M, N constitute the membrane sector of the complex.

The protein resides in the cell membrane. It catalyses the reaction a quinone + NADH + 5 H(+)(in) = a quinol + NAD(+) + 4 H(+)(out). In terms of biological role, NDH-1 shuttles electrons from NADH, via FMN and iron-sulfur (Fe-S) centers, to quinones in the respiratory chain. The immediate electron acceptor for the enzyme in this species is believed to be ubiquinone. Couples the redox reaction to proton translocation (for every two electrons transferred, four hydrogen ions are translocated across the cytoplasmic membrane), and thus conserves the redox energy in a proton gradient. This subunit may bind ubiquinone. The protein is NADH-quinone oxidoreductase subunit H of Rickettsia africae (strain ESF-5).